We begin with the raw amino-acid sequence, 770 residues long: Penicillin-binding protein 1C (770 aa).

The Cytoplasmic portion of the chain corresponds to 1 to 8 (MPRLLTKR). Residues 9 to 29 (GCWITLAAAPFLLFLAAWGAD) traverse the membrane as a helical; Signal-anchor for type II membrane protein segment. The Periplasmic portion of the chain corresponds to 30-770 (KLWPLPLHEV…QIATVKFVMQ (741 aa)). The tract at residues 43 to 213 (RVVVAQDGTP…SRLRPDRWPE (171 aa)) is transglycosylase. Glu84 functions as the Proton donor; for transglycosylase activity in the catalytic mechanism. The transpeptidase stretch occupies residues 278-559 (AGLQRRLEEL…FASAVPLLNQ (282 aa)). The Acyl-ester intermediate; for transpeptidase activity role is filled by Ser342.

In the N-terminal section; belongs to the glycosyltransferase 51 family. This sequence in the C-terminal section; belongs to the transpeptidase family.

The protein resides in the cell inner membrane. It catalyses the reaction [GlcNAc-(1-&gt;4)-Mur2Ac(oyl-L-Ala-gamma-D-Glu-L-Lys-D-Ala-D-Ala)](n)-di-trans,octa-cis-undecaprenyl diphosphate + beta-D-GlcNAc-(1-&gt;4)-Mur2Ac(oyl-L-Ala-gamma-D-Glu-L-Lys-D-Ala-D-Ala)-di-trans,octa-cis-undecaprenyl diphosphate = [GlcNAc-(1-&gt;4)-Mur2Ac(oyl-L-Ala-gamma-D-Glu-L-Lys-D-Ala-D-Ala)](n+1)-di-trans,octa-cis-undecaprenyl diphosphate + di-trans,octa-cis-undecaprenyl diphosphate + H(+). The protein operates within cell wall biogenesis; peptidoglycan biosynthesis. Transglycosylase activity can be inhibited by moenomycin. Cell wall formation. The enzyme has a penicillin-insensitive transglycosylase N-terminal domain (formation of linear glycan strands) and a transpeptidase C-terminal domain which may not be functional. In Escherichia coli (strain K12), this protein is Penicillin-binding protein 1C (pbpC).